The following is a 54-amino-acid chain: Ovomucoid (54 aa).

A Kazal-like domain is found at 4-54; it reads VDCSDYPKPSCTLEDKPLCGSDNQTYSNKCSFCNAVVDSNGTLTLSHFGKC. 3 cysteine pairs are disulfide-bonded: cysteine 6–cysteine 36, cysteine 14–cysteine 33, and cysteine 22–cysteine 54. Asparagine 43 is a glycosylation site (N-linked (GlcNAc...) asparagine).

The protein localises to the secreted. The polypeptide is Ovomucoid (Megapodius freycinet (Dusky scrubfowl)).